We begin with the raw amino-acid sequence, 495 residues long: Cobyric acid synthase (495 aa).

In terms of domain architecture, GATase cobBQ-type spans 256–444; that stretch reads KVNVAVVLLR…VHGILDNPSV (189 aa). The active-site Nucleophile is C337. H436 is a catalytic residue.

It belongs to the CobB/CobQ family. CobQ subfamily.

It functions in the pathway cofactor biosynthesis; adenosylcobalamin biosynthesis. Catalyzes amidations at positions B, D, E, and G on adenosylcobyrinic A,C-diamide. NH(2) groups are provided by glutamine, and one molecule of ATP is hydrogenolyzed for each amidation. In Bacteroides fragilis (strain ATCC 25285 / DSM 2151 / CCUG 4856 / JCM 11019 / LMG 10263 / NCTC 9343 / Onslow / VPI 2553 / EN-2), this protein is Cobyric acid synthase.